A 199-amino-acid polypeptide reads, in one-letter code: MTLVIGLTGGIASGKSTVSSMLLEKNFPVIDADLIAREVVEPGEKAYDQILEAFGKEIIQNDQKIDRPKLGSIIFTDEDKRKQLNAIVHPAVRNRMLTKRDDYINNDVPCVILDIPLLFESNLGYLVDKTLVVYVDEDIQLTRLMKRNEYSEKEALDRIKAQMSLKEKADLADIVIDNNQSVEETKLQLDNVLQKWNIS.

The region spanning Val-4–Ser-199 is the DPCK domain. Ala-12–Thr-17 lines the ATP pocket.

It belongs to the CoaE family.

It localises to the cytoplasm. It catalyses the reaction 3'-dephospho-CoA + ATP = ADP + CoA + H(+). It functions in the pathway cofactor biosynthesis; coenzyme A biosynthesis; CoA from (R)-pantothenate: step 5/5. Its function is as follows. Catalyzes the phosphorylation of the 3'-hydroxyl group of dephosphocoenzyme A to form coenzyme A. In Oceanobacillus iheyensis (strain DSM 14371 / CIP 107618 / JCM 11309 / KCTC 3954 / HTE831), this protein is Dephospho-CoA kinase.